A 747-amino-acid chain; its full sequence is NAD-dependent protein deacetylase sirtuin-1 (747 aa).

A disordered region spans residues 1 to 135 (MADEAALALQ…DDEGEEEEEA (135 aa)). An N-acetylalanine modification is found at A2. The tract at residues 2 to 139 (ADEAALALQP…EEEEEAAAAA (138 aa)) is interaction with CLOCK. The tract at residues 2–268 (ADEAALALQP…LTGAGVSVSC (267 aa)) is interaction with H1-4. Residues S14 and S26 each carry the phosphoserine modification. S27 carries the phosphoserine; by MAPK8 modification. The Nuclear localization signal signature appears at 32-39 (PLRKRPRR). S47 carries the phosphoserine; by MAPK8 modification. The segment covering 61-100 (PAAARGCPGAAAAALWREAEAEAAAAGGEQEAQATAAAGE) has biased composition (low complexity). Acidic residues predominate over residues 120-135 (LYDEDDDDEGEEEEEA). The Nuclear export signal signature appears at 138–145 (AAIGYRDN). The segment at 143–541 (RDNLLFGDEI…LHVSEDSSSP (399 aa)) is interaction with CCAR2. A phosphoserine mark is found at S159, S162, S172, and S173. Positions 223 to 230 (IVINILSE) match the Nuclear localization signal motif. Positions 236–496 (KRKDINTIED…NELCHRLGGE (261 aa)) constitute a Deacetylase sirtuin-type domain. K238 is modified (N6-acetyllysine). The segment at 256 to 259 (IIVL) is required for interaction with the sumoylated form of CCAR2. NAD(+) contacts are provided by residues 261–280 (GAGV…DGIY) and 345–348 (QNID). H363 acts as the Proton acceptor in catalysis. The Zn(2+) site is built by C371 and C374. Residue K377 is modified to N6-acetyllysine. Zn(2+)-binding residues include C395 and C398. 2 positions are modified to S-nitrosocysteine: C395 and C398. The Nuclear export signal signature appears at 425 to 431 (AMKYDKD). K430 carries the post-translational modification N6-acetyllysine. NAD(+)-binding positions include 440–442 (GSS), 465–467 (NRE), and C482. K513 is modified (N6-acetyllysine). 2 disordered regions span residues 523-549 (YLSE…PPDS) and 562-587 (SNDD…TSRN). At T530 the chain carries Phosphothreonine; by DYRK1A, DYRK3 and MAPK8. S535 carries the post-translational modification Phosphoserine. Polar residues predominate over residues 537 to 549 (DSSSPERTSPPDS). The phosphorylated at one of three serine residues stretch occupies residues 538–540 (SSS). A Phosphothreonine modification is found at T544. The residue at position 545 (S545) is a Phosphoserine. The span at 569 to 580 (SESKGCMEEKPQ) shows a compositional bias: basic and acidic residues. K610 is modified (N6-acetyllysine). Phosphoserine; by CaMK2 occurs at positions 659 and 661. A disordered region spans residues 663–726 (DDVLSSSSCG…FGTDGDDQEA (64 aa)). Over residues 666 to 677 (LSSSSCGSNSDS) the composition is skewed to low complexity. A compositionally biased stretch (acidic residues) spans 687-707 (EPMEDESEIEEFYNGLEDEPD). T719 bears the Phosphothreonine mark. Position 747 is a phosphoserine (S747).

The protein belongs to the sirtuin family. Class I subfamily. Interacts with XBP1 isoform 2. Found in a complex with PCAF and MYOD1. Interacts with FOXO1; the interaction deacetylates FOXO1, resulting in its nuclear retention and promotion of its transcriptional activity Component of the eNoSC complex, composed of SIRT1, SUV39H1 and RRP8. Interacts with HES1, HEY2 and PML. Interacts with RPS19BP1/AROS. Interacts with CCAR2 (via N-terminus); the interaction disrupts the interaction between SIRT1 and p53/TP53. Interacts with SETD7; the interaction induces the dissociation of SIRT1 from p53/TP53 and increases p53/TP53 activity. Interacts with MYCN, NR1I2, CREBZF, TSC2, TLE1, FOS, JUN, NR0B2, PPARG, NCOR, IRS1, IRS2 and NMNAT1. Interacts with HNF1A; the interaction occurs under nutrient restriction. Interacts with SUZ12; the interaction mediates the association with the PRC4 histone methylation complex which is specific as an association with PCR2 and PCR3 complex variants is not found. Interacts with BCL6; leads to a epigenetic repression of specific target genes. Interacts with CLOCK, BMAL1 and PER2. Interacts with PPARA; the interaction seems to be modulated by NAD(+) levels. Interacts with NR1H3 and this interaction is inhibited in the presence of CCAR2. Interacts with CHEK2. Interacts with p53/TP53. Exhibits a preferential interaction with sumoylated CCAR2 over its unmodified form. Interacts with PACS2. Interacts with SIRT7. Interacts with PUS7. Interacts with TULP3. Interacts with MORN3; the interaction enhances the ubiquitination of p53/TP53. As to quaternary structure, (Microbial infection) Interacts with HIV-1 Tat. Zn(2+) is required as a cofactor. Post-translationally, methylated on multiple lysine residues; methylation is enhanced after DNA damage and is dispensable for deacetylase activity toward p53/TP53. Phosphorylated. Phosphorylated by STK4/MST1, resulting in inhibition of SIRT1-mediated p53/TP53 deacetylation. Phosphorylation by MAPK8/JNK1 at Ser-27, Ser-47, and Thr-530 leads to increased nuclear localization and enzymatic activity. Phosphorylation at Thr-530 by DYRK1A and DYRK3 activates deacetylase activity and promotes cell survival. Phosphorylation by mammalian target of rapamycin complex 1 (mTORC1) at Ser-47 inhibits deacetylation activity. Phosphorylated by CaMK2, leading to increased p53/TP53 and NF-kappa-B p65/RELA deacetylation activity. Phosphorylation at Ser-27 implicating MAPK9 is linked to protein stability. There is some ambiguity for some phosphosites: Ser-159/Ser-162 and Thr-544/Ser-545. In terms of processing, proteolytically cleaved by cathepsin B upon TNF-alpha treatment to yield catalytic inactive but stable SirtT1 75 kDa fragment (75SirT1). Post-translationally, S-nitrosylated by GAPDH, leading to inhibit the NAD-dependent protein deacetylase activity. Acetylated at various Lys residues. Deacetylated via an autocatalytic mechanism. Autodeacetylation at Lys-238 promotes its protein deacetylase activity. In terms of processing, ubiquitinated; leading to degradation. Deubiquitinated by USP22; leading to stabilization. In terms of tissue distribution, widely expressed.

The protein resides in the nucleus. The protein localises to the PML body. Its subcellular location is the cytoplasm. It is found in the mitochondrion. It catalyses the reaction N(6)-acetyl-L-lysyl-[protein] + NAD(+) + H2O = 2''-O-acetyl-ADP-D-ribose + nicotinamide + L-lysyl-[protein]. The enzyme catalyses N(6)-propanoyl-L-lysyl-[protein] + NAD(+) + H2O = 3''-O-propanoyl-ADP-D-ribose + nicotinamide + L-lysyl-[protein]. The catalysed reaction is N(6)-(2E)-butenoyl-L-lysyl-[protein] + NAD(+) + H2O = 2''-O-(2E)-but-2-enoyl-ADP-D-ribose + nicotinamide + L-lysyl-[protein]. It carries out the reaction N(6)-[(S)-lactoyl]-L-lysyl-[protein] + NAD(+) + H2O = 2''-O-(S)-lactoyl-ADP-D-ribose + nicotinamide + L-lysyl-[protein]. With respect to regulation, inhibited by nicotinamide. Activated by resveratrol (3,5,4'-trihydroxy-trans-stilbene), butein (3,4,2',4'-tetrahydroxychalcone), piceatannol (3,5,3',4'-tetrahydroxy-trans-stilbene), Isoliquiritigenin (4,2',4'-trihydroxychalcone), fisetin (3,7,3',4'-tetrahydroxyflavone) and quercetin (3,5,7,3',4'-pentahydroxyflavone). MAPK8/JNK1 and RPS19BP1/AROS act as positive regulators of deacetylation activity. Negatively regulated by CCAR2. NAD-dependent protein deacetylase that links transcriptional regulation directly to intracellular energetics and participates in the coordination of several separated cellular functions such as cell cycle, response to DNA damage, metabolism, apoptosis and autophagy. Can modulate chromatin function through deacetylation of histones and can promote alterations in the methylation of histones and DNA, leading to transcriptional repression. Deacetylates a broad range of transcription factors and coregulators, thereby regulating target gene expression positively and negatively. Serves as a sensor of the cytosolic ratio of NAD(+)/NADH which is altered by glucose deprivation and metabolic changes associated with caloric restriction. Is essential in skeletal muscle cell differentiation and in response to low nutrients mediates the inhibitory effect on skeletal myoblast differentiation which also involves 5'-AMP-activated protein kinase (AMPK) and nicotinamide phosphoribosyltransferase (NAMPT). Component of the eNoSC (energy-dependent nucleolar silencing) complex, a complex that mediates silencing of rDNA in response to intracellular energy status and acts by recruiting histone-modifying enzymes. The eNoSC complex is able to sense the energy status of cell: upon glucose starvation, elevation of NAD(+)/NADP(+) ratio activates SIRT1, leading to histone H3 deacetylation followed by dimethylation of H3 at 'Lys-9' (H3K9me2) by SUV39H1 and the formation of silent chromatin in the rDNA locus. Deacetylates 'Lys-266' of SUV39H1, leading to its activation. Inhibits skeletal muscle differentiation by deacetylating PCAF and MYOD1. Deacetylates H2A and 'Lys-26' of H1-4. Deacetylates 'Lys-16' of histone H4 (in vitro). Involved in NR0B2/SHP corepression function through chromatin remodeling: Recruited to LRH1 target gene promoters by NR0B2/SHP thereby stimulating histone H3 and H4 deacetylation leading to transcriptional repression. Proposed to contribute to genomic integrity via positive regulation of telomere length; however, reports on localization to pericentromeric heterochromatin are conflicting. Proposed to play a role in constitutive heterochromatin (CH) formation and/or maintenance through regulation of the available pool of nuclear SUV39H1. Upon oxidative/metabolic stress decreases SUV39H1 degradation by inhibiting SUV39H1 polyubiquitination by MDM2. This increase in SUV39H1 levels enhances SUV39H1 turnover in CH, which in turn seems to accelerate renewal of the heterochromatin which correlates with greater genomic integrity during stress response. Deacetylates 'Lys-382' of p53/TP53 and impairs its ability to induce transcription-dependent proapoptotic program and modulate cell senescence. Deacetylates TAF1B and thereby represses rDNA transcription by the RNA polymerase I. Deacetylates MYC, promotes the association of MYC with MAX and decreases MYC stability leading to compromised transformational capability. Deacetylates FOXO3 in response to oxidative stress thereby increasing its ability to induce cell cycle arrest and resistance to oxidative stress but inhibiting FOXO3-mediated induction of apoptosis transcriptional activity; also leading to FOXO3 ubiquitination and protesomal degradation. Appears to have a similar effect on MLLT7/FOXO4 in regulation of transcriptional activity and apoptosis. Deacetylates DNMT1; thereby impairs DNMT1 methyltransferase-independent transcription repressor activity, modulates DNMT1 cell cycle regulatory function and DNMT1-mediated gene silencing. Deacetylates RELA/NF-kappa-B p65 thereby inhibiting its transactivating potential and augments apoptosis in response to TNF-alpha. Deacetylates HIF1A, KAT5/TIP60, RB1 and HIC1. Deacetylates FOXO1 resulting in its nuclear retention and enhancement of its transcriptional activity leading to increased gluconeogenesis in liver. Inhibits E2F1 transcriptional activity and apoptotic function, possibly by deacetylation. Involved in HES1- and HEY2-mediated transcriptional repression. In cooperation with MYCN seems to be involved in transcriptional repression of DUSP6/MAPK3 leading to MYCN stabilization by phosphorylation at 'Ser-62'. Deacetylates MEF2D. Required for antagonist-mediated transcription suppression of AR-dependent genes which may be linked to local deacetylation of histone H3. Represses HNF1A-mediated transcription. Required for the repression of ESRRG by CREBZF. Deacetylates NR1H3 and NR1H2 and deacetylation of NR1H3 at 'Lys-434' positively regulates transcription of NR1H3:RXR target genes, promotes NR1H3 proteasomal degradation and results in cholesterol efflux; a promoter clearing mechanism after reach round of transcription is proposed. Involved in lipid metabolism: deacetylates LPIN1, thereby inhibiting diacylglycerol synthesis. Implicated in regulation of adipogenesis and fat mobilization in white adipocytes by repression of PPARG which probably involves association with NCOR1 and SMRT/NCOR2. Deacetylates p300/EP300 and PRMT1. Deacetylates ACSS2 leading to its activation, and HMGCS1 deacetylation. Involved in liver and muscle metabolism. Through deacetylation and activation of PPARGC1A is required to activate fatty acid oxidation in skeletal muscle under low-glucose conditions and is involved in glucose homeostasis. Involved in regulation of PPARA and fatty acid beta-oxidation in liver. Involved in positive regulation of insulin secretion in pancreatic beta cells in response to glucose; the function seems to imply transcriptional repression of UCP2. Proposed to deacetylate IRS2 thereby facilitating its insulin-induced tyrosine phosphorylation. Deacetylates SREBF1 isoform SREBP-1C thereby decreasing its stability and transactivation in lipogenic gene expression. Involved in DNA damage response by repressing genes which are involved in DNA repair, such as XPC and TP73, deacetylating XRCC6/Ku70, and facilitating recruitment of additional factors to sites of damaged DNA, such as SIRT1-deacetylated NBN can recruit ATM to initiate DNA repair and SIRT1-deacetylated XPA interacts with RPA2. Also involved in DNA repair of DNA double-strand breaks by homologous recombination and specifically single-strand annealing independently of XRCC6/Ku70 and NBN. Promotes DNA double-strand breaks by mediating deacetylation of SIRT6. Transcriptional suppression of XPC probably involves an E2F4:RBL2 suppressor complex and protein kinase B (AKT) signaling. Transcriptional suppression of TP73 probably involves E2F4 and PCAF. Deacetylates WRN thereby regulating its helicase and exonuclease activities and regulates WRN nuclear translocation in response to DNA damage. Deacetylates APEX1 at 'Lys-6' and 'Lys-7' and stimulates cellular AP endonuclease activity by promoting the association of APEX1 to XRCC1. Catalyzes deacetylation of ERCC4/XPF, thereby impairing interaction with ERCC1 and nucleotide excision repair (NER). Increases p53/TP53-mediated transcription-independent apoptosis by blocking nuclear translocation of cytoplasmic p53/TP53 and probably redirecting it to mitochondria. Deacetylates XRCC6/Ku70 at 'Lys-539' and 'Lys-542' causing it to sequester BAX away from mitochondria thereby inhibiting stress-induced apoptosis. Is involved in autophagy, presumably by deacetylating ATG5, ATG7 and MAP1LC3B/ATG8. Deacetylates AKT1 which leads to enhanced binding of AKT1 and PDK1 to PIP3 and promotes their activation. Proposed to play role in regulation of STK11/LBK1-dependent AMPK signaling pathways implicated in cellular senescence which seems to involve the regulation of the acetylation status of STK11/LBK1. Can deacetylate STK11/LBK1 and thereby increase its activity, cytoplasmic localization and association with STRAD; however, the relevance of such activity in normal cells is unclear. In endothelial cells is shown to inhibit STK11/LBK1 activity and to promote its degradation. Deacetylates SMAD7 at 'Lys-64' and 'Lys-70' thereby promoting its degradation. Deacetylates CIITA and augments its MHC class II transactivation and contributes to its stability. Deacetylates MECOM/EVI1. Deacetylates PML at 'Lys-487' and this deacetylation promotes PML control of PER2 nuclear localization. During the neurogenic transition, represses selective NOTCH1-target genes through histone deacetylation in a BCL6-dependent manner and leading to neuronal differentiation. Regulates the circadian expression of several core clock genes, including BMAL1, RORC, PER2 and CRY1 and plays a critical role in maintaining a controlled rhythmicity in histone acetylation, thereby contributing to circadian chromatin remodeling. Deacetylates BMAL1 and histones at the circadian gene promoters in order to facilitate repression by inhibitory components of the circadian oscillator. Deacetylates PER2, facilitating its ubiquitination and degradation by the proteasome. Protects cardiomyocytes against palmitate-induced apoptosis. Deacetylates XBP1 isoform 2; deacetylation decreases protein stability of XBP1 isoform 2 and inhibits its transcriptional activity. Deacetylates PCK1 and directs its activity toward phosphoenolpyruvate production promoting gluconeogenesis. Involved in the CCAR2-mediated regulation of PCK1 and NR1D1. Deacetylates CTNB1 at 'Lys-49'. In POMC (pro-opiomelanocortin) neurons, required for leptin-induced activation of PI3K signaling. Deacetylates SOX9; promoting SOX9 nuclear localization and transactivation activity. Involved in the regulation of centrosome duplication: deacetylates CENATAC in G1 phase, allowing for SASS6 accumulation on the centrosome and subsequent procentriole assembly. Deacetylates NDC80/HEC1. In addition to protein deacetylase activity, also acts as a protein-lysine deacylase by mediating protein delactylation, depropionylation and decrotonylation. Mediates depropionylation of Osterix (SP7). Catalyzes decrotonylation of histones; it however does not represent a major histone decrotonylase. Mediates protein delactylation of TEAD1 and YAP1. In terms of biological role, deacetylates 'Lys-382' of p53/TP53, however with lower activity than isoform 1. In combination, the two isoforms exert an additive effect. Isoform 2 regulates p53/TP53 expression and cellular stress response and is in turn repressed by p53/TP53 presenting a SIRT1 isoform-dependent auto-regulatory loop. Its function is as follows. Catalytically inactive 75SirT1 may be involved in regulation of apoptosis. May be involved in protecting chondrocytes from apoptotic death by associating with cytochrome C and interfering with apoptosome assembly. Functionally, (Microbial infection) In case of HIV-1 infection, interacts with and deacetylates the viral Tat protein. The viral Tat protein inhibits SIRT1 deacetylation activity toward RELA/NF-kappa-B p65, thereby potentiates its transcriptional activity and SIRT1 is proposed to contribute to T-cell hyperactivation during infection. The sequence is that of NAD-dependent protein deacetylase sirtuin-1 from Homo sapiens (Human).